We begin with the raw amino-acid sequence, 321 residues long: Lipoyl synthase (321 aa).

[4Fe-4S] cluster is bound by residues cysteine 68, cysteine 73, cysteine 79, cysteine 94, cysteine 98, cysteine 101, and serine 308. A Radical SAM core domain is found at 80–297 (FNHGTATFMI…KEIALELGFT (218 aa)).

Belongs to the radical SAM superfamily. Lipoyl synthase family. It depends on [4Fe-4S] cluster as a cofactor.

The protein resides in the cytoplasm. The catalysed reaction is [[Fe-S] cluster scaffold protein carrying a second [4Fe-4S](2+) cluster] + N(6)-octanoyl-L-lysyl-[protein] + 2 oxidized [2Fe-2S]-[ferredoxin] + 2 S-adenosyl-L-methionine + 4 H(+) = [[Fe-S] cluster scaffold protein] + N(6)-[(R)-dihydrolipoyl]-L-lysyl-[protein] + 4 Fe(3+) + 2 hydrogen sulfide + 2 5'-deoxyadenosine + 2 L-methionine + 2 reduced [2Fe-2S]-[ferredoxin]. Its pathway is protein modification; protein lipoylation via endogenous pathway; protein N(6)-(lipoyl)lysine from octanoyl-[acyl-carrier-protein]: step 2/2. Its function is as follows. Catalyzes the radical-mediated insertion of two sulfur atoms into the C-6 and C-8 positions of the octanoyl moiety bound to the lipoyl domains of lipoate-dependent enzymes, thereby converting the octanoylated domains into lipoylated derivatives. The polypeptide is Lipoyl synthase (Vibrio atlanticus (strain LGP32) (Vibrio splendidus (strain Mel32))).